We begin with the raw amino-acid sequence, 431 residues long: Putative serine/threonine-protein kinase A (431 aa).

One can recognise a Protein kinase domain in the interval 20 to 279 (YLNKGIVGLG…VREIFQIPYI (260 aa)). ATP is bound by residues 26–34 (VGLGSYGEA) and Lys49. The Proton acceptor role is filled by Asp147. The PH domain occupies 331 to 429 (DVTHRGHVNK…WVHAIQRGIG (99 aa)).

Belongs to the protein kinase superfamily. Ser/Thr protein kinase family.

The enzyme catalyses L-seryl-[protein] + ATP = O-phospho-L-seryl-[protein] + ADP + H(+). It carries out the reaction L-threonyl-[protein] + ATP = O-phospho-L-threonyl-[protein] + ADP + H(+). This chain is Putative serine/threonine-protein kinase A (NRKA), found in Trypanosoma brucei brucei.